Here is a 1483-residue protein sequence, read N- to C-terminus: Heme-responsive zinc finger transcription factor HAP1 (1483 aa).

The span at 1–50 (MSNTPYNSSVPSIASMTQSSVSRSPNMHTATTPGANTSSNSPPLHMSSDS) shows a compositional bias: polar residues. The tract at residues 1–56 (MSNTPYNSSVPSIASMTQSSVSRSPNMHTATTPGANTSSNSPPLHMSSDSSKIKRK) is disordered. Cys-64, Cys-67, Cys-74, Cys-81, Cys-84, and Cys-93 together coordinate Zn(2+). Residues 64–93 (CTICRKRKVKCDKLRPHCQQCTKTGVAHLC) constitute a DNA-binding region (zn(2)-C6 fungal-type). Positions 105-134 (EKELLKDNELKKLRERVKSLEKTLSKVHSS) form a coiled coil. Residues 126–208 (KTLSKVHSSP…ANSSSLSISN (83 aa)) are disordered. Residues 130 to 142 (KVHSSPSSNSLKS) show a composition bias toward low complexity. 2 stretches are compositionally biased toward polar residues: residues 143–152 (YNTPESSNLF) and 160–176 (TLVN…SHMH). Positions 177 to 208 (QQQQQQQQQEQQQDFSRSANANANSSSLSISN) are enriched in low complexity. The segment at 244 to 444 (KGDPYLKLLW…NTIPHHQPQS (201 aa)) is heme-responsive; required for HMC formation. 6 HRM repeats span residues 280–285 (KCPINH), 299–304 (KCPVDH), 323–328 (KCPVDH), 347–352 (RCPVDH), 389–394 (KCPVDH), and 415–420 (RCPIDH). 2 stretches are compositionally biased toward polar residues: residues 432–447 (STHN…SGSH) and 706–734 (QLNA…NPTL). Disordered stretches follow at residues 432 to 458 (STHN…NRKH) and 706 to 767 (QLNA…KENQ). A compositionally biased stretch (low complexity) spans 735–759 (NNNMSAATTNSSSRSGSADSRSGSN). Residues 1192–1197 (KCPVYQ) form an HRM 7 repeat.

In terms of assembly, binds DNA as a homodimer. Interacts with SRO9 and YDJ1. In the absence of heme, binds to at least four cellular proteins, including YDJ1 and SRO9, forming a high-molecular-weight complex (HMC) which results in repression of its activity and dictates its DNA-binding specificity.

It localises to the nucleus. Regulation of oxygen dependent gene expression. It modulates the expression of Iso-1 (CYP1) and Iso-2 (CYP3) cytochrome c. In response to heme, promotes transcription of genes encoding functions required for respiration, controlling oxidative damage and repression of anaerobic genes. Binds to the sequence 5'-CGGNNNTNNCGG-3'. This is Heme-responsive zinc finger transcription factor HAP1 (HAP1) from Saccharomyces cerevisiae (strain Lalvin EC1118 / Prise de mousse) (Baker's yeast).